A 497-amino-acid polypeptide reads, in one-letter code: Serine hydroxymethyltransferase (497 aa).

Residues leucine 176 and 180–182 (GHL) each bind (6S)-5,6,7,8-tetrahydrofolate. N6-(pyridoxal phosphate)lysine is present on lysine 289.

It belongs to the SHMT family. In terms of assembly, homodimer. Pyridoxal 5'-phosphate serves as cofactor.

The protein resides in the cytoplasm. It carries out the reaction (6R)-5,10-methylene-5,6,7,8-tetrahydrofolate + glycine + H2O = (6S)-5,6,7,8-tetrahydrofolate + L-serine. It functions in the pathway one-carbon metabolism; tetrahydrofolate interconversion. Its pathway is amino-acid biosynthesis; glycine biosynthesis; glycine from L-serine: step 1/1. Its function is as follows. Catalyzes the reversible interconversion of serine and glycine with tetrahydrofolate (THF) serving as the one-carbon carrier. This reaction serves as the major source of one-carbon groups required for the biosynthesis of purines, thymidylate, methionine, and other important biomolecules. Also exhibits THF-independent aldolase activity toward beta-hydroxyamino acids, producing glycine and aldehydes, via a retro-aldol mechanism. The sequence is that of Serine hydroxymethyltransferase from Chlamydia trachomatis serovar A (strain ATCC VR-571B / DSM 19440 / HAR-13).